Reading from the N-terminus, the 174-residue chain is Large ribosomal subunit protein uL6 (174 aa).

The protein belongs to the universal ribosomal protein uL6 family. In terms of assembly, part of the 50S ribosomal subunit.

This protein binds to the 23S rRNA, and is important in its secondary structure. It is located near the subunit interface in the base of the L7/L12 stalk, and near the tRNA binding site of the peptidyltransferase center. The chain is Large ribosomal subunit protein uL6 from Acidithiobacillus ferrooxidans (strain ATCC 23270 / DSM 14882 / CIP 104768 / NCIMB 8455) (Ferrobacillus ferrooxidans (strain ATCC 23270)).